Consider the following 301-residue polypeptide: MKVIFMGSSEFSVPTLEFLIGSQHEVLAVYTKAPKPAGRGHLLTKTPVHAYADAHNVPVRSPASLSSDSERDIIEKYMPDAIIVASYGMILPRWMLEVPRFGCINVHPSLLPRWRGAAPMQHAILSGDAVTGVTIMQLNERLDAGDIFLQESTPIGSRENIVALSERLSSMGGRMLLKVLDNLDTMRSVSQDDAGATYAAKPSEFCVNFNDAADYICRQVRAFYPRMFFFLDGKRVKLLEADNYELAGAQIGDVVNDELHIQCGNGTVLAPKIVQPESKKPCDIRSFLRGFRGCVSNVLQR.

A (6S)-5,6,7,8-tetrahydrofolate-binding site is contributed by 109-112; it reads SLLP.

This sequence belongs to the Fmt family.

It catalyses the reaction L-methionyl-tRNA(fMet) + (6R)-10-formyltetrahydrofolate = N-formyl-L-methionyl-tRNA(fMet) + (6S)-5,6,7,8-tetrahydrofolate + H(+). In terms of biological role, attaches a formyl group to the free amino group of methionyl-tRNA(fMet). The formyl group appears to play a dual role in the initiator identity of N-formylmethionyl-tRNA by promoting its recognition by IF2 and preventing the misappropriation of this tRNA by the elongation apparatus. The polypeptide is Methionyl-tRNA formyltransferase (Anaplasma marginale (strain St. Maries)).